The chain runs to 178 residues: Probable DNA-directed RNA polymerase subunit delta (178 aa).

The 68-residue stretch at 14-81 folds into the HTH HARE-type domain; it reads LSMIEVAHAI…GENTWGLRTW (68 aa). The span at 120–143 shows a compositional bias: acidic residues; the sequence is DDDVIDYDSDDPEDEEVEAEDTTS. The segment at 120 to 178 is disordered; sequence DDDVIDYDSDDPEDEEVEAEDTTSDDAPAFEDLSNDDDTDVLPDGIEGQLSELNEDDEN.

The protein belongs to the RpoE family. In terms of assembly, RNAP is composed of a core of 2 alpha, a beta and a beta' subunits. The core is associated with a delta subunit and one of several sigma factors.

Its function is as follows. Participates in both the initiation and recycling phases of transcription. In the presence of the delta subunit, RNAP displays an increased specificity of transcription, a decreased affinity for nucleic acids, and an increased efficiency of RNA synthesis because of enhanced recycling. The protein is Probable DNA-directed RNA polymerase subunit delta of Pediococcus pentosaceus (strain ATCC 25745 / CCUG 21536 / LMG 10740 / 183-1w).